Consider the following 1220-residue polypeptide: Myosin-2 (1220 aa).

The span at 1–12 (MMLSASPNTLAK) shows a compositional bias: polar residues. Disordered stretches follow at residues 1 to 54 (MMLS…ARRS) and 68 to 95 (QNGS…RKEK). Positions 20-33 (ESLRQKDECDRPKD) are enriched in basic and acidic residues. Positions 40–54 (SRPNSRARLPSARRS) are enriched in low complexity. The span at 82 to 95 (ESERKEEGVKRKEK) shows a compositional bias: basic and acidic residues. The 50-residue stretch at 160–209 (KKKLRVWCRVSNGQWQLGKIQSTSADTSLVMLSTANVVKVSTEELFPANP) folds into the Myosin N-terminal SH3-like domain. One can recognise a Myosin motor domain in the interval 213–879 (EGVEDLIQLS…QIGIFEDRRK (667 aa)). Residues 304–311 (GESGAGKT) and 353–361 (NANSSRFGK) each bind ATP. Actin-binding regions lie at residues 638–672 (LIEK…KQHL) and 759–781 (LFKL…KPNS). IQ domains lie at 881–910 (VLQG…VTLV), 904–933 (MRKV…FHAD), and 942–971 (ELSA…QKEL). 2 disordered regions span residues 968–1007 (QKEL…MSDL) and 1075–1118 (SITG…NGNT). 2 stretches are compositionally biased toward polar residues: residues 997-1006 (PQVQPTSMSD) and 1098-1118 (TMST…NGNT). Residues 1003-1071 (SMSDLQKRIL…MSLAAARKSL (69 aa)) adopt a coiled-coil conformation.

This sequence belongs to the TRAFAC class myosin-kinesin ATPase superfamily. Myosin family. Plant myosin class VIII subfamily. Homodimer. Expressed in flowers, leaves and roots.

Its subcellular location is the cell junction. The protein localises to the plasmodesma. It is found in the endosome. In terms of biological role, myosin heavy chain that is required for the cell cycle-regulated transport of various organelles and proteins for their segregation. Functions by binding with its tail domain to receptor proteins on organelles and exerting force with its N-terminal motor domain against actin filaments, thereby transporting its cargo along polarized actin cables. Involved in endocytosis via its action in endosomal trafficking. In Arabidopsis thaliana (Mouse-ear cress), this protein is Myosin-2 (VIII-2).